Consider the following 387-residue polypeptide: Deoxyhypusine synthase (387 aa).

NAD(+) contacts are provided by residues 108 to 112 (SNLIS), 134 to 136 (SAG), glutamate 140, and aspartate 257. Residue 139-140 (EE) participates in spermidine binding. Aspartate 262 serves as a coordination point for spermidine. Residue glycine 304 participates in NAD(+) binding. Position 309 (histidine 309) interacts with spermidine. Position 329-330 (329-330 (TG)) interacts with NAD(+). Residues 335–337 (GSD) and 344–350 (EAVSWGK) contribute to the spermidine site. Lysine 350 acts as the Nucleophile in catalysis. 363-364 (DV) lines the NAD(+) pocket.

This sequence belongs to the deoxyhypusine synthase family. In terms of assembly, homotetramer. The cofactor is NAD(+).

The enzyme catalyses [eIF5A protein]-L-lysine + spermidine = [eIF5A protein]-deoxyhypusine + propane-1,3-diamine. Its pathway is protein modification; eIF5A hypusination. In terms of biological role, catalyzes the NAD-dependent oxidative cleavage of spermidine and the subsequent transfer of the butylamine moiety of spermidine to the epsilon-amino group of a specific lysine residue of the eIF-5A precursor protein to form the intermediate deoxyhypusine residue. This is Deoxyhypusine synthase from Saccharomyces cerevisiae (strain ATCC 204508 / S288c) (Baker's yeast).